We begin with the raw amino-acid sequence, 338 residues long: DNA-directed RNA polymerase I subunit RPA43 (338 aa).

The tract at residues 209–338 (EVSEEVTENG…PKRKGKSNFL (130 aa)) is disordered. 3 positions are modified to phosphoserine: Ser-242, Ser-304, and Ser-316. Residue Thr-322 is modified to Phosphothreonine. A Phosphoserine modification is found at Ser-328. Over residues 328 to 338 (SPKRKGKSNFL) the composition is skewed to basic residues.

The protein belongs to the eukaryotic RPA43 RNA polymerase subunit family. As to quaternary structure, component of the RNA polymerase I (Pol I) complex consisting of 13 subunits: a ten-subunit catalytic core composed of POLR1A/RPA1, POLR1B/RPA2, POLR1C/RPAC1, POLR1D/RPAC2, POLR1H/RPA12, POLR2E/RPABC1, POLR2F/RPABC2, POLR2H/RPABC3, POLR2K/RPABC4 and POLR2L/RPABC5; a mobile stalk subunit POLR1F/RPA43 protruding from the core and additional subunits homologous to general transcription factors POLR1E/RPA49 and POLR1G/RPA34. Interacts with RRN3/TIF-IA. Widely expressed. Expressed in all fetal and adult tissues tested, with highest expression in fetal lung, liver, and kidney, and low expression in all adult tissues.

It localises to the nucleus. It is found in the nucleolus. Component of RNA polymerase I (Pol I), a DNA-dependent RNA polymerase which synthesizes ribosomal RNA precursors using the four ribonucleoside triphosphates as substrates. Through its association with RRN3/TIF-IA may be involved in recruitment of Pol I to rDNA promoters. This is DNA-directed RNA polymerase I subunit RPA43 from Homo sapiens (Human).